The primary structure comprises 405 residues: Tryptophan synthase beta chain (405 aa).

Position 98 is an N6-(pyridoxal phosphate)lysine (Lys98).

Belongs to the TrpB family. Tetramer of two alpha and two beta chains. Pyridoxal 5'-phosphate is required as a cofactor.

It catalyses the reaction (1S,2R)-1-C-(indol-3-yl)glycerol 3-phosphate + L-serine = D-glyceraldehyde 3-phosphate + L-tryptophan + H2O. It participates in amino-acid biosynthesis; L-tryptophan biosynthesis; L-tryptophan from chorismate: step 5/5. In terms of biological role, the beta subunit is responsible for the synthesis of L-tryptophan from indole and L-serine. In Xylella fastidiosa (strain 9a5c), this protein is Tryptophan synthase beta chain (trpB).